The following is a 100-amino-acid chain: Urease subunit gamma (100 aa).

The protein belongs to the urease gamma subunit family. Heterotrimer of UreA (gamma), UreB (beta) and UreC (alpha) subunits. Three heterotrimers associate to form the active enzyme.

The protein localises to the cytoplasm. The enzyme catalyses urea + 2 H2O + H(+) = hydrogencarbonate + 2 NH4(+). Its pathway is nitrogen metabolism; urea degradation; CO(2) and NH(3) from urea (urease route): step 1/1. This Magnetococcus marinus (strain ATCC BAA-1437 / JCM 17883 / MC-1) protein is Urease subunit gamma.